Consider the following 385-residue polypeptide: 8-amino-7-oxononanoate synthase (385 aa).

Arg21 contributes to the substrate binding site. 108-109 (GF) is a pyridoxal 5'-phosphate binding site. His133 contributes to the substrate binding site. The pyridoxal 5'-phosphate site is built by Ser179, His207, and Thr233. Lys236 is modified (N6-(pyridoxal phosphate)lysine). Residue Thr352 coordinates substrate.

This sequence belongs to the class-II pyridoxal-phosphate-dependent aminotransferase family. BioF subfamily. In terms of assembly, homodimer. Requires pyridoxal 5'-phosphate as cofactor.

The enzyme catalyses 6-carboxyhexanoyl-[ACP] + L-alanine + H(+) = (8S)-8-amino-7-oxononanoate + holo-[ACP] + CO2. It functions in the pathway cofactor biosynthesis; biotin biosynthesis. In terms of biological role, catalyzes the decarboxylative condensation of pimeloyl-[acyl-carrier protein] and L-alanine to produce 8-amino-7-oxononanoate (AON), [acyl-carrier protein], and carbon dioxide. This is 8-amino-7-oxononanoate synthase from Salmonella schwarzengrund (strain CVM19633).